The chain runs to 140 residues: Large ribosomal subunit protein uL11 (140 aa).

This sequence belongs to the universal ribosomal protein uL11 family. In terms of assembly, part of the ribosomal stalk of the 50S ribosomal subunit. Interacts with L10 and the large rRNA to form the base of the stalk. L10 forms an elongated spine to which L12 dimers bind in a sequential fashion forming a multimeric L10(L12)X complex. Post-translationally, one or more lysine residues are methylated.

Its function is as follows. Forms part of the ribosomal stalk which helps the ribosome interact with GTP-bound translation factors. The protein is Large ribosomal subunit protein uL11 of Pelobacter propionicus (strain DSM 2379 / NBRC 103807 / OttBd1).